We begin with the raw amino-acid sequence, 488 residues long: Argininosuccinate lyase (488 aa).

This sequence belongs to the lyase 1 family. Argininosuccinate lyase subfamily.

It is found in the cytoplasm. It carries out the reaction 2-(N(omega)-L-arginino)succinate = fumarate + L-arginine. It participates in amino-acid biosynthesis; L-arginine biosynthesis; L-arginine from L-ornithine and carbamoyl phosphate: step 3/3. The sequence is that of Argininosuccinate lyase from Corynebacterium jeikeium (strain K411).